Here is a 221-residue protein sequence, read N- to C-terminus: Cysteine protease inhibitor 8 (221 aa).

The N-terminal stretch at 1-26 (IPSINILSFLLLSSTLSLVAFARSFT) is a signal peptide. The propeptide occupies 27–42 (SENPIVLPTTCHDDDN). A Vacuolar targeting signal motif is present at residues 29 to 34 (NPIVLP). Disulfide bonds link Cys84–Cys136 and Cys184–Cys190.

The protein belongs to the protease inhibitor I3 (leguminous Kunitz-type inhibitor) family.

The protein resides in the vacuole. Its function is as follows. Inhibitor of cysteine proteases. May protect the plant by inhibiting proteases of invading organisms. This chain is Cysteine protease inhibitor 8, found in Solanum tuberosum (Potato).